Here is a 47-residue protein sequence, read N- to C-terminus: Laccase-2d (47 aa).

The region spanning 2-47 is the Plastocyanin-like domain; the sequence is TGPVADLHIINKDLSPDGFQRPTVVAGGGRDVVSIGRAGDNVTIRF.

Belongs to the multicopper oxidase family. In terms of assembly, homodimer. Cu cation serves as cofactor. Post-translationally, N-glycosylated; contains 17% carbohydrates.

Its subcellular location is the secreted. The catalysed reaction is 4 hydroquinone + O2 = 4 benzosemiquinone + 2 H2O. Inhibited by sodium azide, SDS and mercaptoethanol, but not by 4-hexyl resocinol, L-cysteine and dithiothreitol. Activity is inhibited by the heavy metal ions Cr, W, Sn, Ag(+) and Hg(2+), but not by Pb(2+), Fe(3+), Ni(2+), Li(2+), Co(2+) or Cd(2+). Its function is as follows. Lignin degradation and detoxification of lignin-derived products. Has highest activity towards ABTS, also active towards ferulic acid and guaiacol, but is not active towards tyrosine, vanillic acid, 2,5-dimethyl aniline, p-anisidine or violuric acid. The protein is Laccase-2d of Cerrena unicolor (Canker rot fungus).